The primary structure comprises 392 residues: Digeranylgeranylglycerophospholipid reductase (392 aa).

FAD-binding residues include glycine 15, glutamate 34, cysteine 45, alanine 46, glycine 48, arginine 99, alanine 123, aspartate 279, glycine 291, and isoleucine 292. An a 2,3-bis-O-(geranylgeranyl)-sn-glycerol 1-phospholipid-binding site is contributed by valine 370.

Belongs to the geranylgeranyl reductase family. DGGGPL reductase subfamily. It depends on FAD as a cofactor.

The enzyme catalyses a 2,3-bis-O-phytanyl-sn-glycerol 1-phospholipid + 8 oxidized 2[4Fe-4S]-[ferredoxin] = a 2,3-bis-O-(geranylgeranyl)-sn-glycerol 1-phospholipid + 8 reduced 2[4Fe-4S]-[ferredoxin] + 16 H(+). The catalysed reaction is 2,3-bis-O-(phytanyl)-sn-glycerol 1-phosphate + 8 oxidized 2[4Fe-4S]-[ferredoxin] = 2,3-bis-O-(geranylgeranyl)-sn-glycerol 1-phosphate + 8 reduced 2[4Fe-4S]-[ferredoxin] + 16 H(+). It carries out the reaction a 2,3-bis-O-phytanyl-sn-glycerol 1-phospholipid + 8 A = a 2,3-bis-O-(geranylgeranyl)-sn-glycerol 1-phospholipid + 8 AH2. It catalyses the reaction CDP-2,3-bis-O-(geranylgeranyl)-sn-glycerol + 8 AH2 = CDP-2,3-bis-O-(phytanyl)-sn-glycerol + 8 A. The enzyme catalyses archaetidylserine + 8 AH2 = 2,3-bis-O-phytanyl-sn-glycero-3-phospho-L-serine + 8 A. It functions in the pathway membrane lipid metabolism; glycerophospholipid metabolism. Is involved in the reduction of 2,3-digeranylgeranylglycerophospholipids (unsaturated archaeols) into 2,3-diphytanylglycerophospholipids (saturated archaeols) in the biosynthesis of archaeal membrane lipids. Catalyzes the formation of archaetidic acid (2,3-di-O-phytanyl-sn-glyceryl phosphate) from 2,3-di-O-geranylgeranylglyceryl phosphate (DGGGP) via the hydrogenation of each double bond of the isoprenoid chains. Is also probably able to reduce double bonds of geranyl groups in CDP-2,3-bis-O-(geranylgeranyl)-sn-glycerol and archaetidylserine, thus acting at various stages in the biosynthesis of archaeal membrane lipids. The chain is Digeranylgeranylglycerophospholipid reductase from Methanocella arvoryzae (strain DSM 22066 / NBRC 105507 / MRE50).